We begin with the raw amino-acid sequence, 565 residues long: CTP synthase (565 aa).

Residues 1–272 (MARPKNVKHI…DLRVMKKLGL (272 aa)) form an amidoligase domain region. Position 18 (S18) interacts with CTP. UTP is bound at residue S18. 19-24 (SLGKGI) serves as a coordination point for ATP. Position 59 (Y59) interacts with L-glutamine. ATP is bound at residue D76. D76 and E146 together coordinate Mg(2+). CTP contacts are provided by residues 153–155 (DIE), 193–198 (KTKPTQ), and K229. UTP contacts are provided by residues 193-198 (KTKPTQ) and K229. One can recognise a Glutamine amidotransferase type-1 domain in the interval 299–543 (TIGICGKYTE…VHAAKEFAQG (245 aa)). G363 lines the L-glutamine pocket. The active-site Nucleophile; for glutamine hydrolysis is C390. L-glutamine contacts are provided by residues 391–394 (LGMQ), E414, and R471. Catalysis depends on residues H516 and E518.

This sequence belongs to the CTP synthase family. Homotetramer.

It catalyses the reaction UTP + L-glutamine + ATP + H2O = CTP + L-glutamate + ADP + phosphate + 2 H(+). The enzyme catalyses L-glutamine + H2O = L-glutamate + NH4(+). The catalysed reaction is UTP + NH4(+) + ATP = CTP + ADP + phosphate + 2 H(+). Its pathway is pyrimidine metabolism; CTP biosynthesis via de novo pathway; CTP from UDP: step 2/2. Its activity is regulated as follows. Allosterically activated by GTP, when glutamine is the substrate; GTP has no effect on the reaction when ammonia is the substrate. The allosteric effector GTP functions by stabilizing the protein conformation that binds the tetrahedral intermediate(s) formed during glutamine hydrolysis. Inhibited by the product CTP, via allosteric rather than competitive inhibition. Functionally, catalyzes the ATP-dependent amination of UTP to CTP with either L-glutamine or ammonia as the source of nitrogen. Regulates intracellular CTP levels through interactions with the four ribonucleotide triphosphates. In Chlorobaculum tepidum (strain ATCC 49652 / DSM 12025 / NBRC 103806 / TLS) (Chlorobium tepidum), this protein is CTP synthase.